Reading from the N-terminus, the 319-residue chain is Taste receptor type 2 member 14 (319 aa).

Residues 1 to 7 (MDGVIKS) lie on the Extracellular side of the membrane. A helical membrane pass occupies residues 8-28 (IFTFILIVEFIIGNLGNSFIV). The Cytoplasmic segment spans residues 29–55 (LVNCIDWVKRRKISLVDQILIALAISR). The chain crosses the membrane as a helical span at residues 56–76 (ISLVWSIFGSWCVSVFFPALF). Topologically, residues 77–87 (ATEKLLRMLTN) are extracellular. Residues Thr86 and Trp89 each coordinate cholesterol. The chain crosses the membrane as a helical span at residues 88–108 (IWTVTNHFSVWLATILGTFYF). Over 109 to 129 (LKIANFSNSIFLYLKWRVKKV) the chain is Cytoplasmic. The helical transmembrane segment at 130–150 (VLVLLLVTLGLLFLNILLINI) threads the bilayer. The Extracellular segment spans residues 151-184 (HINASINGYRGNMTCSSASCNFIRFSRAIALTST). 2 N-linked (GlcNAc...) asparagine glycosylation sites follow: Asn153 and Asn162. Ala180 is a binding site for cholesterol. A helical membrane pass occupies residues 185–205 (VFVLIPFTLSLATSLLLSFSL). Residues 206-233 (WKHHKKMQHTVKGYRDVSTKAHRGVMQT) are Cytoplasmic-facing. A helical transmembrane segment spans residues 234–254 (VITFLLLYAVFLLTFFISIWA). Topologically, residues 255 to 263 (SVRLKENQI) are extracellular. Residues 264–284 (IILSEMMGLAYPSGHSCVLIL) form a helical membrane-spanning segment. Residues Ser267 and Met270 each contribute to the cholesterol site. Topologically, residues 285–319 (GNKKLRQASLSVLWWLRYRFKHGEPSGHKEFRESS) are cytoplasmic.

It belongs to the G-protein coupled receptor T2R family. In terms of assembly, core component of the TAS2R14-GNAI1 complex, consisting of TAS2R14, GNAI1, GNB1 and GNG2; within the complex interacts with GNAI1. Core component of the TAS2R14-GNAT3 complex, consisting of TAS2R14, GNAT3, GNB1 and GNG2; within the complex interacts with GNAT3. Core component of the TAS2R14-GNAS2 complex, consisting of TAS2R14, GNAS2, GNB1 and GNG2; within the complex interacts with GNAS2.

It is found in the membrane. It carries out the reaction Ca(2+)(in) = Ca(2+)(out). It catalyses the reaction 3',5'-cyclic AMP(in) = 3',5'-cyclic AMP(out). Its activity is regulated as follows. Basal activity is enhanced by binding to bitter tastants, such as flufenamic acid and aristolochic acid. Regulated by cholesterol in a concentration-dependent manner. Functionally, gustducin-linked G-protein coupled receptor that plays a role in the perception of bitterness. The activity of this receptor stimulates GNAT3, activating the gustducin G-protein pathway. Likely plays a role in sensing the chemical composition of the gastrointestinal content and other extra-oral tissues via the inhibitory G-protein pathways. This is Taste receptor type 2 member 14 (TAS2R14) from Macaca mulatta (Rhesus macaque).